A 532-amino-acid chain; its full sequence is Berberine bridge enzyme-like 23 (532 aa).

Positions 1–22 (MRTLEAFALSLFLVFLVKWVNS) are cleaved as a signal peptide. Cysteine 36 and cysteine 102 are oxidised to a cystine. Residue asparagine 78 is glycosylated (N-linked (GlcNAc...) asparagine). The 177-residue stretch at 80–256 (TSQKPILIVT…LSWKVKLVRV (177 aa)) folds into the FAD-binding PCMH-type domain. Residues 117–180 (HDYEGLSYLS…KIHGFPAGTC (64 aa)) constitute a cross-link (6-(S-cysteinyl)-8alpha-(pros-histidyl)-FAD (His-Cys)). N-linked (GlcNAc...) asparagine glycosylation is found at asparagine 272 and asparagine 487.

It belongs to the oxygen-dependent FAD-linked oxidoreductase family. FAD serves as cofactor. The FAD cofactor is bound via a bicovalent 6-S-cysteinyl, 8alpha-N1-histidyl FAD linkage. As to expression, accumulates in cell walls of etiolated hypocotyls.

The protein resides in the secreted. Its subcellular location is the cell wall. The chain is Berberine bridge enzyme-like 23 from Arabidopsis thaliana (Mouse-ear cress).